A 239-amino-acid chain; its full sequence is tRNA (guanine-N(7)-)-methyltransferase (239 aa).

E69, E94, D121, and D144 together coordinate S-adenosyl-L-methionine. The active site involves D144. A substrate-binding site is contributed by K148. The segment at 150-155 (RHNKRR) is interaction with RNA. Substrate contacts are provided by residues D180 and 217–220 (TKFE).

It belongs to the class I-like SAM-binding methyltransferase superfamily. TrmB family. Monomer.

It catalyses the reaction guanosine(46) in tRNA + S-adenosyl-L-methionine = N(7)-methylguanosine(46) in tRNA + S-adenosyl-L-homocysteine. Its pathway is tRNA modification; N(7)-methylguanine-tRNA biosynthesis. Functionally, catalyzes the formation of N(7)-methylguanine at position 46 (m7G46) in tRNA. This chain is tRNA (guanine-N(7)-)-methyltransferase, found in Yersinia pseudotuberculosis serotype O:1b (strain IP 31758).